The following is a 260-amino-acid chain: uncharacterized protein (260 aa).

Positions 1-22 are cleaved as a signal peptide; that stretch reads MGNIKSFALYISILLLIVVVAG. A lipid anchor (N-palmitoyl cysteine) is attached at Cys-23. Cys-23 is lipidated: S-diacylglycerol cysteine.

The protein belongs to the staphylococcal tandem lipoprotein family.

It localises to the cell membrane. This is an uncharacterized protein from Staphylococcus aureus (strain MRSA252).